Consider the following 576-residue polypeptide: DNA primase (576 aa).

A CHC2-type zinc finger spans residues 40–64 (CPFHNEKTPSFNVVAKKQFYHCFGC). Positions 251–333 (DSIIVVEGYM…GLDAGFIFLP (83 aa)) constitute a Toprim domain. 3 residues coordinate Mg(2+): Glu-257, Asp-301, and Asp-303.

It belongs to the DnaG primase family. Monomer. Interacts with DnaB. Zn(2+) serves as cofactor. Requires Mg(2+) as cofactor.

The catalysed reaction is ssDNA + n NTP = ssDNA/pppN(pN)n-1 hybrid + (n-1) diphosphate.. RNA polymerase that catalyzes the synthesis of short RNA molecules used as primers for DNA polymerase during DNA replication. The protein is DNA primase of Legionella pneumophila.